We begin with the raw amino-acid sequence, 702 residues long: Polyribonucleotide nucleotidyltransferase (702 aa).

Residues Asp-485 and Asp-491 each coordinate Mg(2+). Residues 552–612 (PRTEIICIDP…EGVKKAISII (61 aa)) form the KH domain. The S1 motif domain maps to 622-690 (GEIYLGKVTK…NQGRINLSRK (69 aa)).

The protein belongs to the polyribonucleotide nucleotidyltransferase family. The cofactor is Mg(2+).

Its subcellular location is the cytoplasm. The enzyme catalyses RNA(n+1) + phosphate = RNA(n) + a ribonucleoside 5'-diphosphate. Its function is as follows. Involved in mRNA degradation. Catalyzes the phosphorolysis of single-stranded polyribonucleotides processively in the 3'- to 5'-direction. The polypeptide is Polyribonucleotide nucleotidyltransferase (Clostridium botulinum (strain 657 / Type Ba4)).